A 156-amino-acid chain; its full sequence is MATPPKRRAVEATAEKVLRYEAFISDVLQRDLQKVLDHRDKVYEQLAKYLQLRNVIERLQEANHSELYMQVDLGCNFFVDTVVPDTSRIYVALGYGFFLELTLAEALKFIDRKSSLLTELSDNLTKDSMNIKAHIHMLLEGLRELQGLQNFPETQH.

The protein belongs to the UXT family. Homohexamer. Component of the PAQosome complex which is responsible for the biogenesis of several protein complexes and which consists of R2TP complex members RUVBL1, RUVBL2, RPAP3 and PIH1D1, URI complex members PFDN2, PFDN6, PDRG1, UXT and URI1 as well as ASDURF, POLR2E and DNAAF10/WDR92. Interacts with LRPPRC. Interacts with androgen receptor AR (via N-terminus). Interacts with estrogen receptor ESR1; the interaction relocalizes ESR1 to the cytoplasm. In the nucleus, interacts specifically with RELA (via RHD domain) and forms a dynamic complex with NF-kappa-B and is recruited to the NF-kappa-B enhanceosome upon stimulation. Interacts with MECOM. Interacts with URI1.

It is found in the cytoplasm. The protein localises to the nucleus. The protein resides in the cytoskeleton. Its subcellular location is the microtubule organizing center. It localises to the centrosome. It is found in the spindle pole. Involved in gene transcription regulation. Acts in concert with the corepressor URI1 to regulate androgen receptor AR-mediated transcription. Together with URI1, associates with chromatin to the NKX3-1 promoter region. Negatively regulates the transcriptional activity of the estrogen receptor ESR1 by inducing its translocation into the cytoplasm. May act as nuclear chaperone that facilitates the formation of the NF-kappa-B enhanceosome and thus positively regulates NF-kappa-B transcription activity. Potential component of mitochondrial-associated LRPPRC, a multidomain organizer that potentially integrates mitochondria and the microtubular cytoskeleton with chromosome remodeling. Increasing concentrations of UXT contributes to progressive aggregation of mitochondria and cell death potentially through its association with LRPPRC. Suppresses cell transformation and it might mediate this function by interaction and inhibition of the biological activity of cell proliferation and survival stimulatory factors like MECOM. This chain is Protein UXT (UXT), found in Bos taurus (Bovine).